Here is an 837-residue protein sequence, read N- to C-terminus: PE-PGRS family protein PE_PGRS4 (837 aa).

The PE domain maps to 4 to 94 (VIAAPEVIAA…GAYAAAEAAA (91 aa)). Residues 811–825 (NGGKAGGTPGAGGTS) are compositionally biased toward gly residues. The interval 811 to 837 (NGGKAGGTPGAGGTSGLIIGENGLNGL) is disordered. A compositionally biased stretch (low complexity) spans 826–837 (GLIIGENGLNGL).

Belongs to the mycobacterial PE family. PGRS subfamily.

This Mycobacterium tuberculosis (strain ATCC 25618 / H37Rv) protein is PE-PGRS family protein PE_PGRS4.